Here is a 407-residue protein sequence, read N- to C-terminus: Accessory Sec system protein translocase subunit SecY2 (407 aa).

A run of 10 helical transmembrane segments spans residues 13-33 (FLWTLFFLFIYVLGTKLTLPF), 65-85 (LFSVGLSPWMSSMLIWQMFAV), 104-124 (MLLTLVIALIQSVALVLNLPL), 133-153 (TTIMVLDTLVLMAGTYFLIWL), 158-178 (AAMGLGGSIMIVMASMIAYIP), 190-210 (ISSLWLALMLVFSLVFLYLAV), 248-268 (IMYAMTLVSIPQYFLLIIHFL), 287-307 (PAWFILYLLTIFILALAFAFI), 345-365 (FALVGAFYLILISGLPMMVVL), and 370-390 (YLRLSMIPGIFMIFIGMVFSI).

Belongs to the SecY/SEC61-alpha family. SecY2 subfamily. Component of the accessory SecA2/SecY2 protein translocase complex required to export cell wall proteins. May form heterotrimers with SecE and SecG subunits.

The protein localises to the cell membrane. Its function is as follows. Part of the accessory SecA2/SecY2 system specifically required for export of possible cell wall proteins. The central subunit of a protein translocation channel. The polypeptide is Accessory Sec system protein translocase subunit SecY2 (Streptococcus sanguinis (strain SK36)).